Here is a 561-residue protein sequence, read N- to C-terminus: Arginine--tRNA ligase (561 aa).

Positions 128–138 (ANPTGPLHVGH) match the 'HIGH' region motif.

The protein belongs to the class-I aminoacyl-tRNA synthetase family. Monomer.

The protein resides in the cytoplasm. The catalysed reaction is tRNA(Arg) + L-arginine + ATP = L-arginyl-tRNA(Arg) + AMP + diphosphate. This chain is Arginine--tRNA ligase, found in Leptothrix cholodnii (strain ATCC 51168 / LMG 8142 / SP-6) (Leptothrix discophora (strain SP-6)).